The chain runs to 367 residues: Sulfate/thiosulfate import ATP-binding protein CysA 2 (367 aa).

The ABC transporter domain maps to Val-3 to Ile-237. Position 35–42 (Gly-35–Thr-42) interacts with ATP.

This sequence belongs to the ABC transporter superfamily. Sulfate/tungstate importer (TC 3.A.1.6) family. As to quaternary structure, the complex is composed of two ATP-binding proteins (CysA), two transmembrane proteins (CysT and CysW) and a solute-binding protein (CysP).

Its subcellular location is the cell inner membrane. The enzyme catalyses sulfate(out) + ATP + H2O = sulfate(in) + ADP + phosphate + H(+). It catalyses the reaction thiosulfate(out) + ATP + H2O = thiosulfate(in) + ADP + phosphate + H(+). Part of the ABC transporter complex CysAWTP involved in sulfate/thiosulfate import. Responsible for energy coupling to the transport system. The protein is Sulfate/thiosulfate import ATP-binding protein CysA 2 of Rhizobium meliloti (strain 1021) (Ensifer meliloti).